Consider the following 1657-residue polypeptide: Ras GTPase-activating-like protein IQGAP1 (1657 aa).

Residue Ser-2 is modified to N-acetylserine. Ser-2 is modified (phosphoserine). Positions 44–159 (LCHLEEAKRW…YCIHALSLYL (116 aa)) constitute a Calponin-homology (CH) domain. Phosphotyrosine is present on Tyr-172. Position 330 is a phosphoserine (Ser-330). The WW domain maps to 679–712 (GDNNSKWVKHWVKGGYYYYHNLETQEGGWDEPPN). IQ domains follow at residues 745-774 (NEGLITRLQARCRGYLVRQEFRSRMNFLKK), 775-804 (QIPAITCIQSQWRGYKQKKAYQDRLAYLRS), 805-834 (HKDEVVKIQSLARMHQARKRYRDRLQYFRD), and 835-864 (HINDIIKIQAFIRANKARDDYKTLINAEDP). The C1 stretch occupies residues 956 to 1274 (GGLKALSKEK…FFQTACDVPE (319 aa)). The region spanning 1020 to 1269 (YLLLRLFKTA…QKFRRFFQTA (250 aa)) is the Ras-GAP domain. Residues 1276–1657 (QDKFNVDEYS…FLLNKKFYGK (382 aa)) form a C2 region. A disordered region spans residues 1410–1448 (TPATSEQEAEHQRAMQRRAIRDAKTPDKMKKSKSVKEDS). The segment covering 1417–1448 (EAEHQRAMQRRAIRDAKTPDKMKKSKSVKEDS) has biased composition (basic and acidic residues). The residue at position 1441 (Ser-1441) is a Phosphoserine; by PKC. Position 1443 is a phosphoserine; by PKC/PRKCE (Ser-1443).

As to quaternary structure, interacts with CDC42; the interaction is demonstrated with IQGAP1 in GTP-bound and in nucleotide-free state. Interacts with RAC1. Does not interact with RHOA. Interacts with TSG101. Interacts with PAK6. Interacts with TMEM14B; this interaction increases IQGAP1 phosphorylation and induces its nuclear translocation. Interacts with SASH1. Interacts with PJVK. Interacts with SLC26A4; this interaction enhances the chloride-bicarbonate exchange activity of SLC26A4. Interacts with SVEP1. Interacts with ILK; the interaction is required for localization of IQGAP to the cell cortex. In terms of assembly, (Microbial infection) Interacts with ebolavirus vp40. (Microbial infection) Interacts with human cytomegalovirus protein UL5. As to quaternary structure, (Microbial infection) Interacts with C.jejuni invasion antigen D (CiaD). In terms of processing, phosphorylation of Ser-1443 by PKC/PRKCE prevents interaction between C1 and C2, allowing binding of nucleotide-free CDC42. Ser-1443 phosphorylation enhances the ability to promote neurite outgrowth. As to expression, expressed in the placenta, lung, and kidney. A lower level expression is seen in the heart, liver, skeletal muscle and pancreas.

The protein resides in the cell membrane. Its subcellular location is the nucleus. It is found in the cytoplasm. The protein localises to the cell cortex. It localises to the apical cell membrane. The protein resides in the basolateral cell membrane. Functionally, plays a crucial role in regulating the dynamics and assembly of the actin cytoskeleton. Recruited to the cell cortex by interaction with ILK which allows it to cooperate with its effector DIAPH1 to locally stabilize microtubules and allow stable insertion of caveolae into the plasma membrane. Binds to activated CDC42 but does not stimulate its GTPase activity. Associates with calmodulin. May promote neurite outgrowth. May play a possible role in cell cycle regulation by contributing to cell cycle progression after DNA replication arrest. The chain is Ras GTPase-activating-like protein IQGAP1 (IQGAP1) from Homo sapiens (Human).